We begin with the raw amino-acid sequence, 77 residues long: Acyl carrier protein (77 aa).

A Carrier domain is found at 2-77; it reads SDIADRVKKI…DAVKFIQGAV (76 aa). Residue Ser-37 is modified to O-(pantetheine 4'-phosphoryl)serine.

This sequence belongs to the acyl carrier protein (ACP) family. Post-translationally, 4'-phosphopantetheine is transferred from CoA to a specific serine of apo-ACP by AcpS. This modification is essential for activity because fatty acids are bound in thioester linkage to the sulfhydryl of the prosthetic group.

Its subcellular location is the cytoplasm. The protein operates within lipid metabolism; fatty acid biosynthesis. Functionally, carrier of the growing fatty acid chain in fatty acid biosynthesis. This Paracoccus denitrificans (strain Pd 1222) protein is Acyl carrier protein.